Consider the following 653-residue polypeptide: Cytidine monophosphate-N-acetylneuraminic acid hydroxylase (653 aa).

The Rieske domain occupies 11–120 (LSPEETSELK…PEYNEDGSLD (110 aa)). Cysteine 62, histidine 64, cysteine 83, and histidine 86 together coordinate [2Fe-2S] cluster. Residues 596–622 (WNPSQATPAVEAKDPSSDSKDSATKPG) form a disordered region. The span at 606–618 (EAKDPSSDSKDSA) shows a compositional bias: basic and acidic residues. The helical transmembrane segment at 630 to 647 (LLRPLGIVVALVGVGVAI) threads the bilayer.

The protein belongs to the CMP-Neu5Ac hydroxylase family. It depends on [2Fe-2S] cluster as a cofactor.

The protein localises to the membrane. It carries out the reaction CMP-N-acetyl-beta-neuraminate + 2 Fe(II)-[cytochrome b5] + O2 + 2 H(+) = CMP-N-glycoloyl-beta-neuraminate + 2 Fe(III)-[cytochrome b5] + H2O. It participates in amino-sugar metabolism; N-acetylneuraminate metabolism. Its function is as follows. Sialic acids are components of carbohydrate chains of glycoconjugates and are involved in cell-cell recognition and cell-pathogen interactions. Catalyzes the conversion of CMP-N-acetylneuraminic acid (CMP-Neu5Ac) into its hydroxylated derivative CMP-N-glycolylneuraminic acid (CMP-Neu5Gc), a sialic acid abundantly expressed at the surface of many cells. The chain is Cytidine monophosphate-N-acetylneuraminic acid hydroxylase (cnh) from Asterias rubens (Common European starfish).